We begin with the raw amino-acid sequence, 218 residues long: Large ribosomal subunit protein bL25 (218 aa).

2 disordered regions span residues 1 to 20 and 185 to 218; these read MKTH…GPAR and PTAA…ASEE. The segment covering 192 to 218 has biased composition (acidic residues); it reads EEGEEGEEGEEGGEGGEAEGAEAASEE.

It belongs to the bacterial ribosomal protein bL25 family. CTC subfamily. Part of the 50S ribosomal subunit; part of the 5S rRNA/L5/L18/L25 subcomplex. Contacts the 5S rRNA. Binds to the 5S rRNA independently of L5 and L18.

This is one of the proteins that binds to the 5S RNA in the ribosome where it forms part of the central protuberance. In Desulfatibacillum aliphaticivorans, this protein is Large ribosomal subunit protein bL25.